We begin with the raw amino-acid sequence, 477 residues long: UDP-N-acetylmuramate--L-alanine ligase (477 aa).

120–126 (GSHGKTT) contacts ATP.

The protein belongs to the MurCDEF family.

The protein resides in the cytoplasm. The enzyme catalyses UDP-N-acetyl-alpha-D-muramate + L-alanine + ATP = UDP-N-acetyl-alpha-D-muramoyl-L-alanine + ADP + phosphate + H(+). Its pathway is cell wall biogenesis; peptidoglycan biosynthesis. Functionally, cell wall formation. The chain is UDP-N-acetylmuramate--L-alanine ligase from Rickettsia canadensis (strain McKiel).